The sequence spans 455 residues: MAQHFSLAACDVVGFDLDHTLCRYNLPESAPLIYNSFAQFLVKEKGYDKELLNVTPEDWDFCCKGLALDLEDGNFLKLANNGTVLRASHGTKMMTPEVLAEAYGKKEWKHFLSDTGMACRSGKYYFYDNYFDLPGALLCARVVDYLTKLNNGQKTFDFWKDIVAAIQHNYKMSAFKENCGIYFPEIKRDPGRYLHSCPESVKKWLRQLKNAGKILLLITSSHSDYCRLLCEYILGNDFTDLFDIVITNALKPGFFSHLPSQRPFRTLENDEEQEALPSLDKPGWYSQGNAVHLYELLKKMTGKPEPKVVYFGDSMHSDIFPARHYSNWETVLILEELRGDEGTRSQRPEESEPLEKKGKYEGPKAKPLNTSSKKWGSFFIDSVLGLENTEDSLVYTWSCKRISTYSTIAIPSIEAIAELPLDYKFTRFSSSNSKTAGYYPNPPLVLSSDETLISK.

Asp16 acts as the Nucleophile in catalysis. 2 residues coordinate Mg(2+): Asp16 and Asp18. Asp18 (proton donor) is an active-site residue. The residue at position 171 (Lys171) is an N6-acetyllysine. Asp313 is a Mg(2+) binding site. The segment covering 339 to 364 (GDEGTRSQRPEESEPLEKKGKYEGPK) has biased composition (basic and acidic residues). A disordered region spans residues 339–368 (GDEGTRSQRPEESEPLEKKGKYEGPKAKPL).

It belongs to the 5'(3')-deoxyribonucleotidase family.

This is 5'-nucleotidase domain-containing protein 1 (NT5DC1) from Homo sapiens (Human).